The primary structure comprises 136 residues: MLSNPKRTRFRKQHRGRMKGISYRGNRICFGRYALQALEPTWITSRQIEAGRRAMTRYARRGGKIWVRIFPDKPVTVRPTETRMGSGKGSPEYWVSVVKPGRILYEMGGVSEIVAREAISIAASKMPIRTQFIIAG.

It belongs to the universal ribosomal protein uL16 family. Part of the 50S ribosomal subunit.

The protein localises to the plastid. The protein resides in the chloroplast. The protein is Large ribosomal subunit protein uL16c of Buxus microphylla (Littleleaf boxwood).